Here is a 544-residue protein sequence, read N- to C-terminus: Probable protein kinase UbiB (544 aa).

The chain crosses the membrane as a helical span at residues 1 to 21 (MIFGELRRLYLIIGVMLSYGL). The Protein kinase domain maps to 123 to 500 (DFQQEPLASA…HVRQSQSRFL (378 aa)). Residues 129–137 (LASASIAQV) and lysine 151 contribute to the ATP site. The active-site Proton acceptor is aspartate 286. The next 2 helical transmembrane spans lie at 499–519 (FLFG…TQGA) and 520–540 (DEGS…IIGW).

The protein belongs to the ABC1 family. UbiB subfamily.

The protein resides in the cell inner membrane. The protein operates within cofactor biosynthesis; ubiquinone biosynthesis [regulation]. Is probably a protein kinase regulator of UbiI activity which is involved in aerobic coenzyme Q (ubiquinone) biosynthesis. This is Probable protein kinase UbiB from Sodalis glossinidius (strain morsitans).